A 164-amino-acid chain; its full sequence is HTH-type transcriptional regulator IscR (164 aa).

The region spanning 2-131 (RLTSKGRYAV…SSISLEELVN (130 aa)) is the HTH rrf2-type domain. The H-T-H motif DNA-binding region spans 28–51 (LADISERQGISLSYLEQLFSRLRK). [2Fe-2S] cluster contacts are provided by C92, C98, and C104. The disordered stretch occupies residues 141–164 (RQDNDKRRAPNGRAQETINVNLRP). The segment covering 154–164 (AQETINVNLRP) has biased composition (polar residues).

[2Fe-2S] cluster is required as a cofactor.

Regulates the transcription of several operons and genes involved in the biogenesis of Fe-S clusters and Fe-S-containing proteins. This Photorhabdus laumondii subsp. laumondii (strain DSM 15139 / CIP 105565 / TT01) (Photorhabdus luminescens subsp. laumondii) protein is HTH-type transcriptional regulator IscR.